Here is a 96-residue protein sequence, read N- to C-terminus: U-scoloptoxin(06)-Sm1a (96 aa).

A signal peptide spans Met-1–Ala-23.

The protein belongs to the scoloptoxin-06 family. Contains 2 disulfide bonds. Expressed by the venom gland.

It localises to the secreted. The sequence is that of U-scoloptoxin(06)-Sm1a from Scolopendra morsitans (Tanzanian blue ringleg centipede).